Consider the following 430-residue polypeptide: Tol-Pal system protein TolB (430 aa).

The first 21 residues, 1–21 (MKQALRVAFGFLILWASVLHA), serve as a signal peptide directing secretion.

This sequence belongs to the TolB family. In terms of assembly, the Tol-Pal system is composed of five core proteins: the inner membrane proteins TolA, TolQ and TolR, the periplasmic protein TolB and the outer membrane protein Pal. They form a network linking the inner and outer membranes and the peptidoglycan layer.

Its subcellular location is the periplasm. Part of the Tol-Pal system, which plays a role in outer membrane invagination during cell division and is important for maintaining outer membrane integrity. TolB occupies a key intermediary position in the Tol-Pal system because it communicates directly with both membrane-embedded components, Pal in the outer membrane and TolA in the inner membrane. The polypeptide is Tol-Pal system protein TolB (Shigella dysenteriae serotype 1 (strain Sd197)).